We begin with the raw amino-acid sequence, 619 residues long: Dihydroxy-acid dehydratase (619 aa).

Asp-80 is a Mg(2+) binding site. Cys-121 provides a ligand contact to [2Fe-2S] cluster. Mg(2+) contacts are provided by Asp-122 and Lys-123. An N6-carboxylysine modification is found at Lys-123. Cys-196 is a [2Fe-2S] cluster binding site. Glu-492 provides a ligand contact to Mg(2+). Residue Ser-518 is the Proton acceptor of the active site.

Belongs to the IlvD/Edd family. Homodimer. The cofactor is [2Fe-2S] cluster. Requires Mg(2+) as cofactor.

It carries out the reaction (2R)-2,3-dihydroxy-3-methylbutanoate = 3-methyl-2-oxobutanoate + H2O. The catalysed reaction is (2R,3R)-2,3-dihydroxy-3-methylpentanoate = (S)-3-methyl-2-oxopentanoate + H2O. Its pathway is amino-acid biosynthesis; L-isoleucine biosynthesis; L-isoleucine from 2-oxobutanoate: step 3/4. It participates in amino-acid biosynthesis; L-valine biosynthesis; L-valine from pyruvate: step 3/4. Functionally, functions in the biosynthesis of branched-chain amino acids. Catalyzes the dehydration of (2R,3R)-2,3-dihydroxy-3-methylpentanoate (2,3-dihydroxy-3-methylvalerate) into 2-oxo-3-methylpentanoate (2-oxo-3-methylvalerate) and of (2R)-2,3-dihydroxy-3-methylbutanoate (2,3-dihydroxyisovalerate) into 2-oxo-3-methylbutanoate (2-oxoisovalerate), the penultimate precursor to L-isoleucine and L-valine, respectively. The sequence is that of Dihydroxy-acid dehydratase from Bifidobacterium adolescentis (strain ATCC 15703 / DSM 20083 / NCTC 11814 / E194a).